Consider the following 118-residue polypeptide: SPbeta prophage-derived uncharacterized protein YolB (118 aa).

This chain is SPbeta prophage-derived uncharacterized protein YolB (yolB), found in Bacillus subtilis (strain 168).